A 243-amino-acid chain; its full sequence is Carboxy-S-adenosyl-L-methionine synthase (243 aa).

S-adenosyl-L-methionine is bound by residues Y40, 65–67 (GCS), 90–91 (DN), 118–119 (DI), N133, and R200.

This sequence belongs to the class I-like SAM-binding methyltransferase superfamily. Cx-SAM synthase family. In terms of assembly, homodimer.

The catalysed reaction is prephenate + S-adenosyl-L-methionine = carboxy-S-adenosyl-L-methionine + 3-phenylpyruvate + H2O. Catalyzes the conversion of S-adenosyl-L-methionine (SAM) to carboxy-S-adenosyl-L-methionine (Cx-SAM). The protein is Carboxy-S-adenosyl-L-methionine synthase of Shewanella piezotolerans (strain WP3 / JCM 13877).